We begin with the raw amino-acid sequence, 544 residues long: Chaperonin GroEL (544 aa).

Residues 30–33 (TLGP), K51, 87–91 (DGTTT), G415, and D495 each bind ATP.

Belongs to the chaperonin (HSP60) family. Forms a cylinder of 14 subunits composed of two heptameric rings stacked back-to-back. Interacts with the co-chaperonin GroES.

Its subcellular location is the cytoplasm. It carries out the reaction ATP + H2O + a folded polypeptide = ADP + phosphate + an unfolded polypeptide.. Functionally, together with its co-chaperonin GroES, plays an essential role in assisting protein folding. The GroEL-GroES system forms a nano-cage that allows encapsulation of the non-native substrate proteins and provides a physical environment optimized to promote and accelerate protein folding. In Aeromonas salmonicida, this protein is Chaperonin GroEL.